A 230-amino-acid polypeptide reads, in one-letter code: UPF0173 metal-dependent hydrolase Sca_1312 (230 aa).

This sequence belongs to the UPF0173 family.

This Staphylococcus carnosus (strain TM300) protein is UPF0173 metal-dependent hydrolase Sca_1312.